The following is a 416-amino-acid chain: Transcription termination factor Rho (416 aa).

Residues 51-121 (LIYSYGELDI…LKLIYVNGEK (71 aa)) enclose the Rho RNA-BD domain. ATP contacts are provided by residues 162–167 (GKGQRG), 174–179 (KAGKTT), and arginine 205.

Belongs to the Rho family. In terms of assembly, homohexamer. The homohexamer assembles into an open ring structure.

Functionally, facilitates transcription termination by a mechanism that involves Rho binding to the nascent RNA, activation of Rho's RNA-dependent ATPase activity, and release of the mRNA from the DNA template. This is Transcription termination factor Rho from Streptobacillus moniliformis (strain ATCC 14647 / DSM 12112 / NCTC 10651 / 9901).